A 258-amino-acid polypeptide reads, in one-letter code: Imidazole glycerol phosphate synthase subunit HisF (258 aa).

Residues aspartate 11 and aspartate 130 contribute to the active site.

This sequence belongs to the HisA/HisF family. Heterodimer of HisH and HisF.

The protein resides in the cytoplasm. It catalyses the reaction 5-[(5-phospho-1-deoxy-D-ribulos-1-ylimino)methylamino]-1-(5-phospho-beta-D-ribosyl)imidazole-4-carboxamide + L-glutamine = D-erythro-1-(imidazol-4-yl)glycerol 3-phosphate + 5-amino-1-(5-phospho-beta-D-ribosyl)imidazole-4-carboxamide + L-glutamate + H(+). It functions in the pathway amino-acid biosynthesis; L-histidine biosynthesis; L-histidine from 5-phospho-alpha-D-ribose 1-diphosphate: step 5/9. Functionally, IGPS catalyzes the conversion of PRFAR and glutamine to IGP, AICAR and glutamate. The HisF subunit catalyzes the cyclization activity that produces IGP and AICAR from PRFAR using the ammonia provided by the HisH subunit. The polypeptide is Imidazole glycerol phosphate synthase subunit HisF (Salmonella arizonae (strain ATCC BAA-731 / CDC346-86 / RSK2980)).